Consider the following 458-residue polypeptide: Protein RICE SALT SENSITIVE 3 (458 aa).

A compositionally biased stretch (gly residues) spans 1 to 17 (MVGSGAAGGGGGGGGGG). 4 disordered regions span residues 1 to 21 (MVGS…DHAR), 220 to 325 (TSPS…PEGD), 354 to 374 (GGGA…GHGG), and 386 to 458 (SHSN…TFLE). Residues 220 to 232 (TSPSPSSFPLKQQ) show a composition bias toward low complexity. Positions 245-262 (HAPPQLPPGASPLFPPGP) are enriched in pro residues. Residues 308 to 317 (QQPMAAPQQH) are compositionally biased toward low complexity. The span at 413–436 (SSSTTSTSPSVSASTAPAPPQQQQ) shows a compositional bias: low complexity.

As to quaternary structure, interacts with BHLH094, BHLH089, TIFY11A/JAZ9 and TIFY11C/JAZ11. Forms a ternary complex with TIFY11A/JAZ9 and BHLH094 in the nucleus. In terms of tissue distribution, expressed in root tips. Expressed at high levels in the meristematic zone and at low levels in the elongation zone of the root tip.

It localises to the nucleus. Its subcellular location is the cytoplasm. Involved in the repression of jasmonate (JA)-induced genes. Forms a ternary complex with TIFY11A/JAZ9 and BHLH094 to negatively regulate JA-responsive genes. Involved in transcriptional regulation in the root tip. Plays a regulatory role in root cell elongation. Regulates root cell elongation during salt stress. This is Protein RICE SALT SENSITIVE 3 from Oryza sativa subsp. japonica (Rice).